The following is a 144-amino-acid chain: ATP synthase subunit 9, mitochondrial (144 aa).

Residues 1–63 (MASTRVLASR…ATRQITQKRA (63 aa)) constitute a mitochondrion transit peptide. Transmembrane regions (helical) follow at residues 83–103 (TAAI…AALL) and 120–140 (AILG…VALM).

The protein belongs to the ATPase C chain family. In terms of assembly, F-type ATPases have 2 components, CF(1) - the catalytic core - and CF(0) - the membrane proton channel. CF(1) has five subunits: alpha(3), beta(3), gamma(1), delta(1), epsilon(1). CF(0) has three main subunits: a, b and c.

The protein localises to the mitochondrion membrane. In terms of biological role, mitochondrial membrane ATP synthase (F(1)F(0) ATP synthase or Complex V) produces ATP from ADP in the presence of a proton gradient across the membrane which is generated by electron transport complexes of the respiratory chain. F-type ATPases consist of two structural domains, F(1) - containing the extramembraneous catalytic core and F(0) - containing the membrane proton channel, linked together by a central stalk and a peripheral stalk. During catalysis, ATP synthesis in the catalytic domain of F(1) is coupled via a rotary mechanism of the central stalk subunits to proton translocation. Part of the complex F(0) domain. A homomeric c-ring of probably 10 subunits is part of the complex rotary element. This chain is ATP synthase subunit 9, mitochondrial (ATP9), found in Podospora anserina (Pleurage anserina).